A 1273-amino-acid polypeptide reads, in one-letter code: DNA-directed RNA polymerase subunit beta (1273 aa).

Residues 1252–1273 (ADDQDLVVSSNDEEVSENDERS) form a disordered region.

It belongs to the RNA polymerase beta chain family. In terms of assembly, the RNAP catalytic core consists of 2 alpha, 1 beta, 1 beta' and 1 omega subunit. When a sigma factor is associated with the core the holoenzyme is formed, which can initiate transcription.

The enzyme catalyses RNA(n) + a ribonucleoside 5'-triphosphate = RNA(n+1) + diphosphate. Functionally, DNA-dependent RNA polymerase catalyzes the transcription of DNA into RNA using the four ribonucleoside triphosphates as substrates. The chain is DNA-directed RNA polymerase subunit beta from Dehalococcoides mccartyi (strain CBDB1).